Here is a 115-residue protein sequence, read N- to C-terminus: Dolichyl-diphosphooligosaccharide--protein glycosyltransferase subunit DAD2 (115 aa).

The Cytoplasmic segment spans residues 1–31 (MVKSTSKDAQDLFHSLHSAYTATPTNLKIID). A helical membrane pass occupies residues 32 to 52 (LYVCFAVFTALIQVAYMALVG). The Lumenal portion of the chain corresponds to 53-55 (SFP). A helical membrane pass occupies residues 56–76 (FNSFLSGVLSCIGTAVLAVCL). Over 77–94 (RIQVNKENKEFKDLAPER) the chain is Cytoplasmic. The chain crosses the membrane as a helical span at residues 95-115 (AFADFVLCNLVLHLVIINFLG).

This sequence belongs to the DAD/OST2 family. As to quaternary structure, component of the oligosaccharyltransferase (OST) complex.

It is found in the endoplasmic reticulum membrane. Its pathway is protein modification; protein glycosylation. Subunit of the oligosaccharyl transferase (OST) complex that catalyzes the initial transfer of a defined glycan (Glc(3)Man(9)GlcNAc(2) in eukaryotes) from the lipid carrier dolichol-pyrophosphate to an asparagine residue within an Asn-X-Ser/Thr consensus motif in nascent polypeptide chains, the first step in protein N-glycosylation. N-glycosylation occurs cotranslationally and the complex associates with the Sec61 complex at the channel-forming translocon complex that mediates protein translocation across the endoplasmic reticulum (ER). All subunits are required for a maximal enzyme activity. The polypeptide is Dolichyl-diphosphooligosaccharide--protein glycosyltransferase subunit DAD2 (DAD2) (Arabidopsis thaliana (Mouse-ear cress)).